A 672-amino-acid polypeptide reads, in one-letter code: Synaptotagmin-like protein 4 (672 aa).

The region spanning 4-122 is the RabBD domain; it reads ILDLSFLSEM…KATGDWFYDQ (119 aa). The FYVE-type zinc-finger motif lies at 63-105; sequence CARCQEGLGRLISKSNTCVGCNHLVCRECRVLESNGSWRCKVC. Residues 199 to 222 are disordered; that stretch reads SESLDSYTADSDSTSRRDSLDKSG. Phosphoserine is present on residues Ser-201, Ser-204, Ser-217, Ser-221, and Ser-274. A C2 1 domain is found at 357–479; that stretch reads VTGKIAFSLK…KLDKKLDHCL (123 aa). Position 489 is a phosphoserine (Ser-489). The 127-residue stretch at 508–634 folds into the C2 2 domain; the sequence is PASKLPVGGD…ISSGEVVDWM (127 aa).

Part of a ternary complex containing STX1A and RAB27A. Can bind both dominant negative and dominant active mutants of RAB27A. Binds STXBP1, RAB3A, RAB8A and RAB27B. Interacts with MYO5A. As to expression, detected in insulin-secreting cell lines.

Its subcellular location is the membrane. It is found in the cytoplasmic vesicle. The protein localises to the secretory vesicle membrane. Its function is as follows. Modulates exocytosis of dense-core granules and secretion of hormones in the pancreas and the pituitary. Interacts with vesicles containing negatively charged phospholipids in a Ca(2+)-independent manner. This is Synaptotagmin-like protein 4 (Sytl4) from Rattus norvegicus (Rat).